Consider the following 146-residue polypeptide: Ribosome maturation factor RimP (146 aa).

Belongs to the RimP family.

The protein resides in the cytoplasm. Functionally, required for maturation of 30S ribosomal subunits. The polypeptide is Ribosome maturation factor RimP (Helicobacter pylori (strain Shi470)).